A 159-amino-acid chain; its full sequence is MDLELYDQTTTGAQPEQLQLIRDLIDLAGQTLKLRDDTEVSVTLMNNDAIQKINEQYRGVDRPTDVISFAMHDDDEDDLIVMDPEMAAEMPLNLGDIMISVDKVSEQAAFLNHSEARELGYLVVHGFLHLNGYDHLQPADETEMFTLQRQILDAYGLEK.

Residues histidine 125, histidine 129, and histidine 135 each coordinate Zn(2+).

This sequence belongs to the endoribonuclease YbeY family. Zn(2+) is required as a cofactor.

The protein resides in the cytoplasm. Its function is as follows. Single strand-specific metallo-endoribonuclease involved in late-stage 70S ribosome quality control and in maturation of the 3' terminus of the 16S rRNA. The chain is Endoribonuclease YbeY from Lactiplantibacillus plantarum (strain ATCC BAA-793 / NCIMB 8826 / WCFS1) (Lactobacillus plantarum).